The sequence spans 333 residues: Gap junction alpha-4 protein (333 aa).

The Cytoplasmic portion of the chain corresponds to 1 to 20 (MGDWGFLEKLLDQVQEHSTV). Residues 21–40 (VGKIWLTVLFIFRILILGLA) traverse the membrane as a helical segment. Topologically, residues 41 to 76 (GESVWGDEQSDFECNTAQPGCTNVCYDQAFPISHIR) are extracellular. Residues 77-99 (YWVLQFLFVSTPTLIYLGHVIYL) traverse the membrane as a helical segment. Over 100-148 (SRREERLRQKEGELRALPSKDPHVERALAAIEHQMAKISVAEDGRLRIR) the chain is Cytoplasmic. The helical transmembrane segment at 149–171 (GALMGTYVISVLCKSVLEAGFLY) threads the bilayer. Residues 172 to 208 (GQWRLYGWTMEPVFVCQRAPCPHVVDCYVSRPTEKTI) are Extracellular-facing. The helical transmembrane segment at 209 to 231 (FIIFMLVVGVISLVLNLLELVHL) threads the bilayer. Over 232–333 (LCRCVSREIK…NSSASKKQYV (102 aa)) the chain is Cytoplasmic. The segment at 292–333 (ANLTTEERLTSTRPPPFVNAAPQGGQKSSSRPNSSASKKQYV) is disordered. Low complexity predominate over residues 318 to 333 (KSSSRPNSSASKKQYV).

Belongs to the connexin family. Alpha-type (group II) subfamily. A connexon is composed of a hexamer of connexins. In terms of tissue distribution, highly expressed in lung.

It is found in the cell membrane. It localises to the cell junction. The protein localises to the gap junction. Functionally, one gap junction consists of a cluster of closely packed pairs of transmembrane channels, the connexons, through which materials of low MW diffuse from one cell to a neighboring cell. This chain is Gap junction alpha-4 protein (Gja4), found in Rattus norvegicus (Rat).